The chain runs to 184 residues: Peptide deformylase (184 aa).

Residues cysteine 111 and histidine 154 each coordinate Fe cation. Glutamate 155 is an active-site residue. Histidine 158 serves as a coordination point for Fe cation.

It belongs to the polypeptide deformylase family. Requires Fe(2+) as cofactor.

The enzyme catalyses N-terminal N-formyl-L-methionyl-[peptide] + H2O = N-terminal L-methionyl-[peptide] + formate. Its function is as follows. Removes the formyl group from the N-terminal Met of newly synthesized proteins. Requires at least a dipeptide for an efficient rate of reaction. N-terminal L-methionine is a prerequisite for activity but the enzyme has broad specificity at other positions. This chain is Peptide deformylase, found in Lactobacillus gasseri (strain ATCC 33323 / DSM 20243 / BCRC 14619 / CIP 102991 / JCM 1131 / KCTC 3163 / NCIMB 11718 / NCTC 13722 / AM63).